The chain runs to 233 residues: Uridylate kinase (233 aa).

ATP contacts are provided by residues lysine 8–glycine 11, glycine 51, and arginine 55. Residues aspartate 68 and threonine 129–threonine 136 each bind UMP. ATP is bound by residues threonine 156, tyrosine 162, and aspartate 165.

This sequence belongs to the UMP kinase family. As to quaternary structure, homohexamer.

It is found in the cytoplasm. It catalyses the reaction UMP + ATP = UDP + ADP. Its pathway is pyrimidine metabolism; CTP biosynthesis via de novo pathway; UDP from UMP (UMPK route): step 1/1. Inhibited by UTP. Functionally, catalyzes the reversible phosphorylation of UMP to UDP. The sequence is that of Uridylate kinase from Pseudothermotoga lettingae (strain ATCC BAA-301 / DSM 14385 / NBRC 107922 / TMO) (Thermotoga lettingae).